The chain runs to 321 residues: MTKFALVGDVGGTNARLALCDLASGEISRAKTYSGLDYPSLEAVVRVYLEEHQVTVNEGCIAIACPITGDWVAMTNHTWAFSIAEMKRNLGFAHLEIINDFTAVSMAIPMLKAEHLIQFGGSAPVAGKPIAVYGAGTGLGVAHLVHVDKRWVSLPGEGGHVDFAPNSEEEGIILEELRAELGHVSAERVLSGPGLVNLYRAIVKSDGRLPENLQPREVTERALADSCTDCRRALSLFCVIMGRFGGNLALTLGTFGGVYIAGGIVPRFLEFFKASGFRGGFEDKGRFKAYVQDIPVYLIVHDNPGLLGSGAHLRQTLGQVL.

8 to 13 (GDVGGT) is a binding site for ATP.

This sequence belongs to the bacterial glucokinase family.

Its subcellular location is the cytoplasm. The catalysed reaction is D-glucose + ATP = D-glucose 6-phosphate + ADP + H(+). The sequence is that of Glucokinase from Klebsiella pneumoniae subsp. pneumoniae (strain ATCC 700721 / MGH 78578).